The chain runs to 100 residues: MNLTPREKDKLLISLAAIVARNRLERGVRLNHPEAVALISDFVVEGAREGRSVADLMQAGAHVIRAEQCMEGVPEMLHSVQVEATFPDGTKLVTVHHPIR.

Belongs to the urease gamma subunit family. In terms of assembly, heterotrimer of UreA (gamma), UreB (beta) and UreC (alpha) subunits. Three heterotrimers associate to form the active enzyme.

The protein resides in the cytoplasm. The catalysed reaction is urea + 2 H2O + H(+) = hydrogencarbonate + 2 NH4(+). It functions in the pathway nitrogen metabolism; urea degradation; CO(2) and NH(3) from urea (urease route): step 1/1. This chain is Urease subunit gamma, found in Cereibacter sphaeroides (strain ATCC 17025 / ATH 2.4.3) (Rhodobacter sphaeroides).